A 145-amino-acid polypeptide reads, in one-letter code: Ribonuclease H (145 aa).

The region spanning 2–143 (SKKEVAIYTD…ADSLARKAII (142 aa)) is the RNase H type-1 domain. Mg(2+) is bound by residues Asp11, Glu49, Asp71, and Asp135.

This sequence belongs to the RNase H family. As to quaternary structure, monomer. Requires Mg(2+) as cofactor.

It is found in the cytoplasm. It catalyses the reaction Endonucleolytic cleavage to 5'-phosphomonoester.. Functionally, endonuclease that specifically degrades the RNA of RNA-DNA hybrids. The polypeptide is Ribonuclease H (Wolbachia sp. subsp. Drosophila simulans (strain wRi)).